Reading from the N-terminus, the 296-residue chain is Gamma-D-glutamyl-L-lysine dipeptidyl-peptidase (296 aa).

Substrate contacts are provided by residues Tyr90, 199–201, and 218–219; these read DCS and DA. The NlpC/P60 domain occupies 170–295; sequence KGTAEDIIQT…ELCAVRRCFS (126 aa). The Nucleophile role is filled by Cys200. The Proton acceptor role is filled by His253. His265 is an active-site residue.

Belongs to the peptidase C40 family.

It carries out the reaction The enzyme releases L-Ala-gamma-D-Glu dipeptides from cell wall peptides via cleavage of an L-Ala-gamma-D-Glu-|-L-Lys bond.. Its pathway is cell wall degradation; peptidoglycan degradation. Its function is as follows. Specifically hydrolyzes gamma-D-glutamyl-L-lysine bonds in murein peptides, releasing L-Ala-D-Glu. This Bacillus subtilis (strain 168) protein is Gamma-D-glutamyl-L-lysine dipeptidyl-peptidase (ykfC).